The following is a 566-amino-acid chain: Phenylalanine--tRNA ligase beta subunit (566 aa).

Positions 287-362 (YFQEEVEFDV…IGEGLASFYP (76 aa)) constitute a B5 domain. Residues aspartate 340, aspartate 346, glutamate 349, and aspartate 350 each coordinate Mg(2+).

The protein belongs to the phenylalanyl-tRNA synthetase beta subunit family. Type 2 subfamily. Tetramer of two alpha and two beta subunits. Mg(2+) serves as cofactor.

It localises to the cytoplasm. It carries out the reaction tRNA(Phe) + L-phenylalanine + ATP = L-phenylalanyl-tRNA(Phe) + AMP + diphosphate + H(+). The protein is Phenylalanine--tRNA ligase beta subunit of Borrelia garinii subsp. bavariensis (strain ATCC BAA-2496 / DSM 23469 / PBi) (Borreliella bavariensis).